We begin with the raw amino-acid sequence, 759 residues long: TSK-associating protein 1 (759 aa).

Residues methionine 1–cysteine 29 form the signal peptide. The disordered stretch occupies residues glycine 55 to threonine 74. Over residues alanine 63 to threonine 74 the composition is skewed to polar residues. 10 EFE repeat repeats span residues valine 91 to leucine 138, serine 139 to histidine 176, serine 177 to histidine 215, serine 216 to glutamine 254, serine 255 to histidine 293, alanine 294 to histidine 329, phenylalanine 330 to glutamine 368, serine 369 to glutamine 407, serine 408 to glutamate 443, and serine 444 to glutamate 473. Positions valine 91 to glutamate 473 are 10 X approximate EFE repeat. 2 coiled-coil regions span residues arginine 142–alanine 461 and isoleucine 685–glutamate 734. 4 disordered regions span residues glutamate 154–leucine 184, glutamine 200–arginine 219, alanine 271–alanine 332, and leucine 393–methionine 414.

As to quaternary structure, homomultimer. Interacts (via C-terminal domain) with GIP1, CSN1 (via N-terminal domain) and TSK (via TPR repeats). Binds calcium through the EFE repeats. In terms of tissue distribution, expressed preferentially in flowers and shoot apex.

The protein localises to the endoplasmic reticulum lumen. Its subcellular location is the nucleus envelope. The protein resides in the cytoplasm. In terms of biological role, involved in seedling development in the dark. May be involved, when interacting with TSK, in the organization of spindle microtubules and may participate, when interacting with GIP1, in structural links between the nuclear envelope and the cytoskeleton. The sequence is that of TSK-associating protein 1 (TSA1) from Arabidopsis thaliana (Mouse-ear cress).